The chain runs to 982 residues: Ubiquitin carboxyl-terminal hydrolase 37 (982 aa).

Residues 32–34 carry the KEN box 1 motif; sequence KEN. 2 short sequence motifs (D-box) span residues 71-79 and 96-105; these read RLMLTLQDN and RLFLDAVHQN. Residue Ser115 is modified to Phosphoserine. Residues 128-162 form a disordered region; sequence RTSQKETHRQLSYSDNQVSSKRGSLETKDDIPFRK. A compositionally biased stretch (polar residues) spans 137–149; sequence QLSYSDNQVSSKR. Residues 150–160 are compositionally biased toward basic and acidic residues; that stretch reads GSLETKDDIPF. Positions 161–169 match the D-box 3 motif; the sequence is RKVLGNPGR. The residue at position 171 (Ser171) is a Phosphoserine. Over residues 183 to 201 the composition is skewed to low complexity; the sequence is TRTIPSLTSTSTPLRSGLL. The disordered stretch occupies residues 183–307; it reads TRTIPSLTST…TPSAKRSLGF (125 aa). Position 213 is a phosphoserine (Ser213). The KEN box 2 signature appears at 224 to 226; that stretch reads KEN. Positions 246–260 are enriched in basic and acidic residues; that stretch reads SREKQLSLKQSEENR. The span at 282–301 shows a compositional bias: polar residues; it reads YSPSSTNLDRTNISSQTPSA. Residues 343-954 form the USP domain; it reads QGFSNLGNTC…SGYIFFYMHK (612 aa). Cys352 serves as the catalytic Nucleophile. Residue Ser631 is modified to Phosphoserine; by CDK2. Phosphoserine is present on residues Ser653 and Ser655. Disordered stretches follow at residues 672–705 and 720–798; these read ISSS…GFDA and KREA…GEVD. Composition is skewed to basic and acidic residues over residues 684 to 698 and 720 to 735; these read KDSK…KSEL and KREA…DDKP. Positions 707–726 constitute a UIM 1 domain; sequence SEEELLAAVLEISKREASPS. Phosphoserine is present on Ser773. Over residues 777–789 the composition is skewed to basic and acidic residues; sequence ITKDCDENKENKT. The short motif at 785–787 is the KEN box 3 element; that stretch reads KEN. 2 consecutive UIM domains span residues 809 to 828 and 831 to 850; these read REEQ…QEAW and KEDD…FNNS. Catalysis depends on His909, which acts as the Proton acceptor.

It belongs to the peptidase C19 family. Interacts with FZR1/CDH1. Interacts with CDT1. Polyubiquitinated via 'Lys-11'-linked ubiquitin by the APC(CDH1) complex during late mitosis, leading to its degradation. Able to mediate auto-deubiquitination. Post-translationally, phosphorylated at Ser-631 by CDK2 during G1/S phase but not during mitosis; phosphorylation at Ser-631 is required for deubiquitinase activity. Also polyubiquitinated during early G1 phase, without leading to degradation. Phosphorylated at Ser-115 by ATM following DNA damage, which in turn increases its deubiquitination activity towards BLM.

It is found in the nucleus. The protein localises to the chromosome. The enzyme catalyses Thiol-dependent hydrolysis of ester, thioester, amide, peptide and isopeptide bonds formed by the C-terminal Gly of ubiquitin (a 76-residue protein attached to proteins as an intracellular targeting signal).. Its function is as follows. Deubiquitinase that plays a role in different processes including cell cycle regulation, DNA replication or DNA damage response. Antagonizes the anaphase-promoting complex (APC/C) during G1/S transition by mediating deubiquitination of cyclin-A (CCNA1 and CCNA2), thereby promoting S phase entry. Specifically mediates deubiquitination of 'Lys-11'-linked polyubiquitin chains, a specific ubiquitin-linkage type mediated by the APC/C complex. Phosphorylation at Ser-628 during G1/S phase maximizes the deubiquitinase activity, leading to prevent degradation of cyclin-A (CCNA1 and CCNA2). Plays an important role in the regulation of DNA replication by stabilizing the licensing factor CDT1. Also plays an essential role beyond S-phase entry to promote the efficiency and fidelity of replication by deubiquitinating checkpoint kinase 1/CHK1, promoting its stability. Sustains the DNA damage response (DDR) by deubiquitinating and stabilizing the ATP-dependent DNA helicase BLM. Mechanistically, DNA double-strand breaks (DSB) promotes ATM-mediated phosphorylation of USP37 and enhances the binding between USP37 and BLM. Promotes cell migration by deubiquitinating and stabilizing the epithelial-mesenchymal transition (EMT)-inducing transcription factor SNAI. Plays a role in the regulation of mitotic spindle assembly and mitotic progression by associating with chromatin-associated WAPL and stabilizing it through deubiquitination. This chain is Ubiquitin carboxyl-terminal hydrolase 37 (USP37), found in Sus scrofa (Pig).